We begin with the raw amino-acid sequence, 129 residues long: 3-oxo-4,17-pregnadiene-20-carboxyl-CoA hydratase beta subunit (129 aa).

Belongs to the thioester dehydratase family. Heterodimer composed of ChsH1 and ChsH2. Two heterodimers combine to form a heterotetramer. The complex interacts with Ltp2 via the DUF35 C-terminal region of ChsH2. The ChsH1-ChsH2-Ltp2 protein complex is composed of two protomers that form a heterohexameric structure through the Ltp2 dimerization interface.

The enzyme catalyses 3-oxochola-4,17-dien-22-oyl-CoA + H2O = 17-hydroxy-3-oxochol-4-en-22-oyl-CoA. It carries out the reaction (2E)-octenoyl-CoA + H2O = 3-hydroxyoctanoyl-CoA. The catalysed reaction is (2E)-decenoyl-CoA + H2O = 3-hydroxydecanoyl-CoA. It participates in steroid metabolism; cholesterol degradation. Its activity is regulated as follows. In the absence of the Ltp2 aldolase, ChsH1/ChsH2 can hydrate only about 30% of the 3-OPDC-CoA substrate. Complete turnover requires the presence of Ltp2. Its function is as follows. Involved in cholesterol side chain degradation. Catalyzes the hydration of 3-oxo-4,17-pregnadiene-20-carboxyl-CoA (3-OPDC-CoA) to form 17-hydroxy-3-oxo-4-pregnene-20-carboxyl-CoA (17-HOPC-CoA), in the modified beta-oxidation pathway for cholesterol side chain degradation. Can also use octenoyl-CoA and decenoyl-CoA, with lower efficiency. This Mycobacterium tuberculosis (strain ATCC 25618 / H37Rv) protein is 3-oxo-4,17-pregnadiene-20-carboxyl-CoA hydratase beta subunit.